The chain runs to 261 residues: (S)-ureidoglycine aminohydrolase (261 aa).

Residues 184-230 form the Cupin type-2 domain; sequence LSFAPGASHGYIETHVQEHGAYILSGQGVYNLDNNWIPVKKGDYIFM. Mn(2+) contacts are provided by Glu196, His198, His202, and Gln236. Glu196 contacts substrate. Substrate-binding residues include Gln236, Tyr249, and Lys253.

It belongs to the UGHY family. Monomer. Requires Mn(2+) as cofactor.

Its subcellular location is the cytoplasm. The enzyme catalyses (S)-2-ureidoglycine + H2O = (S)-ureidoglycolate + NH4(+). Involved in the anaerobic nitrogen utilization via the assimilation of allantoin. Catalyzes the second stereospecific hydrolysis reaction (deamination) of the allantoin degradation pathway, producing S-ureidoglycolate and ammonia from S-ureidoglycine. This Escherichia coli (strain K12) protein is (S)-ureidoglycine aminohydrolase (allE).